The sequence spans 672 residues: Poly-beta-1,6-N-acetyl-D-glucosamine N-deacetylase (672 aa).

The first 20 residues, 1–20 (MLRNGNKYLLMLVSIIMLTA), serve as a signal peptide directing secretion. The N-palmitoyl cysteine moiety is linked to residue C21. C21 carries S-diacylglycerol cysteine lipidation. The NodB homology domain occupies 107–349 (KAVVLTFDDG…IQRVKDMQIS (243 aa)).

This sequence belongs to the polysaccharide deacetylase family.

The protein localises to the cell outer membrane. Its function is as follows. Catalyzes the N-deacetylation of poly-beta-1,6-N-acetyl-D-glucosamine (PGA), a biofilm adhesin polysaccharide. N-deacetylation promotes PGA export through the PgaA porin. The polypeptide is Poly-beta-1,6-N-acetyl-D-glucosamine N-deacetylase (pgaB) (Escherichia coli O157:H7).